A 272-amino-acid chain; its full sequence is METYAVFGNPIAHSKSPFIHQQFAQQLNIEHPYGRVLAPINDFINTLNAFFSAGGKGANVTVPFKEEAFARADELTERAALAGAVNTLKRLEDGRLQGDNTDGIGLLSDLERLSFIRPGLRILLIGAGGASRGVLLPLLSLDCAVTITNRTVSRAEELAKLFAHTGSIQALGMDELEGHEFDLIINATSSGISGDIPAIPSSLIHLGIYCYDMFYQKGKTPFLAWCEQRGSKRNADGLGMLVAQAAHAFLLWHGVLPDVEPVIKQLQEELSA.

Shikimate-binding positions include 14–16 and Thr-61; that span reads SKS. The active-site Proton acceptor is the Lys-65. Glu-77 is an NADP(+) binding site. Asn-86 and Asp-102 together coordinate shikimate. NADP(+) contacts are provided by residues 126–130, 149–154, and Met-213; these read GAGGA and NRTVSR. Tyr-215 provides a ligand contact to shikimate. Gly-237 lines the NADP(+) pocket.

This sequence belongs to the shikimate dehydrogenase family. Homodimer.

The catalysed reaction is shikimate + NADP(+) = 3-dehydroshikimate + NADPH + H(+). The protein operates within metabolic intermediate biosynthesis; chorismate biosynthesis; chorismate from D-erythrose 4-phosphate and phosphoenolpyruvate: step 4/7. Its function is as follows. Involved in the biosynthesis of the chorismate, which leads to the biosynthesis of aromatic amino acids. Catalyzes the reversible NADPH linked reduction of 3-dehydroshikimate (DHSA) to yield shikimate (SA). The sequence is that of Shikimate dehydrogenase (NADP(+)) from Shigella boydii serotype 4 (strain Sb227).